Reading from the N-terminus, the 766-residue chain is MTITHNLGFPRIGAQRELKRAVEAYWAGKQTADELLATGRALRAAHWRRQADSGLRFVPVGDFAWYDHILEWTTLLGAVPARFAQPETQAVSLDTLFRMGRGRAPSGKPAAACEMTKWFDTNYHYIVPELVPGQTYRIAREDLFEQVREAQALGYAVKPVIPGPLTWLYLGKGDAFQQGASDEDKLKLLANLLPVYQQVLKRLADQGVEWVQIDEPILALDLPAAWRDAFGLAYAQLAGSPVKVLLATYFDGLKDNLSTVTKLPVAGLHVDLVRAPEQLDDVVEALHADQVLSAGVINGRNVWRTDLDQALRKLEPVARQLGDRLWLAPSCSLLHVPVDLLAETELDAELKSWLSFASQKLDELSLLGRALDGDSSQAVQEGLAAQRAALAARRSSPRIHNPAVGRRMAASEQVSRDRAPFAERIRQQQARLNLPPFPTTTIGSFPQTAEIRGLRRDWKSGALSDSTYEALIRKEIEAVIRFQEKVGLDVLVHGEPERNDMVEYFGELLAGFAFTKNGWVQSYGSRCVKPPIIFGDVARPAPMTVGWSSYAQSLTDKPVKGMLTGPVTILQWSFVRDDQPREATCRQLALALRDEVLDLEKAGVKVIQIDEPAIREGLPLRRADWQAYLDWAVDCFRLSTAGVADDTQIHTHMCYSEFNDIIESIAAMDADVITIETSRSNMELLKAFEDFHYPNDIGPGVYDIHSPNVPDVDWMVGLMQKAGANLSKERLWVNPDCGLKTRAWPETEAALISMVQAARTLRQATS.

5-methyltetrahydropteroyltri-L-glutamate contacts are provided by residues 16 to 19 (RELK) and Lys-117. Residues 442 to 444 (IGS) and Glu-495 each bind L-homocysteine. L-methionine is bound by residues 442-444 (IGS) and Glu-495. 5-methyltetrahydropteroyltri-L-glutamate-binding positions include 526-527 (RC) and Trp-572. Residue Asp-610 participates in L-homocysteine binding. Asp-610 contacts L-methionine. A 5-methyltetrahydropteroyltri-L-glutamate-binding site is contributed by Glu-616. Zn(2+)-binding residues include His-652, Cys-654, and Glu-676. The Proton donor role is filled by His-705. Zn(2+) is bound at residue Cys-737.

The protein belongs to the vitamin-B12 independent methionine synthase family. It depends on Zn(2+) as a cofactor.

It catalyses the reaction 5-methyltetrahydropteroyltri-L-glutamate + L-homocysteine = tetrahydropteroyltri-L-glutamate + L-methionine. It functions in the pathway amino-acid biosynthesis; L-methionine biosynthesis via de novo pathway; L-methionine from L-homocysteine (MetE route): step 1/1. In terms of biological role, catalyzes the transfer of a methyl group from 5-methyltetrahydrofolate to homocysteine resulting in methionine formation. This chain is 5-methyltetrahydropteroyltriglutamate--homocysteine methyltransferase, found in Bordetella avium (strain 197N).